Consider the following 818-residue polypeptide: H(+)/Cl(-) exchange transporter 3 (818 aa).

The Cytoplasmic segment spans residues 1–125; the sequence is MESEQLFHRG…WEMTKSLYDA (125 aa). Positions 13–17 match the Di-leucine internalization motif; mediates targeting to late endosome and lysosome membranes motif; that stretch reads RNSYN. An IP motif; mediates targeting to recycling endosomes motif is present at residues 18–19; the sequence is SI. 3 short sequence motifs (di-leucine internalization motif; mediates targeting to late endosome and lysosome membranes) span residues 28 to 29, 46 to 47, and 71 to 75; these read LL and LLDLL. A helical membrane pass occupies residues 126–163; the sequence is WSGWLVVTLTGLASGALAGLIDIAADWMTDLKEGICLS. N-linked (GlcNAc...) asparagine glycosylation occurs at Asn177. Residues 209-232 traverse the membrane as a helical segment; the sequence is MNYIMYIFWALSFAFLAVSLVKVF. The Selectivity filter part_1 signature appears at 238–242; it reads GSGIP. Ser239 serves as a coordination point for chloride. Residues 241–248 constitute an intramembrane region (helical); the sequence is IPEIKTIL. Transmembrane regions (helical) follow at residues 258 to 276 and 282 to 301; these read GKWTLMIKTITLVLAVASG and EGPLVHVACCCGNIFSYLFP. The short motif at 280–284 is the Selectivity filter part_2 element; it reads GKEGP. 2 consecutive intramembrane regions (helical) follow at residues 313-325 and 329-337; these read VLSAASAAGVSVA and PIGGVLFSL. The next 3 helical transmembrane spans lie at 349–367, 391–416, and 423–443; these read LWRSFFAALVAAFVLRSIN, FPFILLGVFGGLWGAFFIRANIAWCR, and FGKYPVLEVIIVAAITAVIAF. Residues Asn451 and Asn479 are each glycosylated (N-linked (GlcNAc...) asparagine). 2 consecutive transmembrane segments (helical) span residues 500 to 520 and 525 to 544; these read IWQLCLALIFKIIMTVFTFGI and GLFIPSMAIGAIAGRIVGIA. Positions 525–529 match the Selectivity filter part_3 motif; that stretch reads GLFIP. A chloride-binding site is contributed by Phe527. 2 consecutive intramembrane regions (helical) follow at residues 572–586 and 590–601; these read GLYAMVGAAACLGGV and TVSLVVIVFELT. The note=Loop between two helices intramembrane region spans 602–605; that stretch reads GGLE. Residues 606 to 624 traverse the membrane as a helical segment; it reads YIVPLMAAVMTSKWVGDAF. Over 625–818 the chain is Cytoplasmic; it reads GREGIYEAHI…NQDPASIMFN (194 aa). Tyr630 is a binding site for chloride. 2 consecutive CBS domains span residues 658–722 and 755–812; these read MRPR…ARKK and LDMS…NQDP. Residues 689 to 691 and 796 to 799 contribute to the ATP site; these read YNG and TKKD.

Belongs to the chloride channel (TC 2.A.49) family. ClC-3/CLCN3 subfamily. Monomer and homodimer. Forms heterodimers with CLCN4. N-glycosylated. Detected in kidney, in the apical part of proximal tubule cells (at protein level). Expressed at high levels in the kidney while a low level expression is seen in the brain. Within the brain, it is prominent in the hippocampus, cerebral cortex and olfactory bulb. As to expression, brain, pancreas, kidney, liver, lung, retina, olfactory bulb, and spinal cord. In terms of tissue distribution, pancreas, kidney, liver, lung and retina. Brain, heart, pancreas, kidney, liver, lung, retina, olfactory bulb, and spinal cord. As to expression, expressed at high levels in the liver and at low levels in the brain.

It is found in the cytoplasmic vesicle. The protein resides in the secretory vesicle membrane. The protein localises to the lysosome membrane. Its subcellular location is the late endosome membrane. It localises to the cell membrane. It is found in the early endosome membrane. The protein resides in the recycling endosome membrane. With respect to regulation, inhibited by Cd(2+). May influence large dense-core vesicle exocytosis in adrenal chromaffin cells. Functionally, strongly outwardly rectifying, electrogenic H(+)/Cl(-)exchanger which mediates the exchange of chloride ions against protons. The CLC channel family contains both chloride channels and proton-coupled anion transporters that exchange chloride or another anion for protons. The presence of conserved gating glutamate residues is typical for family members that function as antiporters. Its function is as follows. Strongly outwardly rectifying, electrogenic H(+)/Cl(-)exchanger which mediates the exchange of chloride ions against protons. Facilitates endosomal acidification and chloride accumulation in hepatocytes. In terms of biological role, strongly outwardly rectifying, electrogenic H(+)/Cl(-)exchanger which mediates the exchange of chloride ions against protons. The chain is H(+)/Cl(-) exchange transporter 3 (Clcn3) from Mus musculus (Mouse).